We begin with the raw amino-acid sequence, 95 residues long: Ferredoxin-like protein FixX (95 aa).

Belongs to the bacterial-type ferredoxin family. FixX subfamily.

Could be part of an electron transfer system required for anaerobic carnitine reduction. Could be a 3Fe-4S cluster-containing protein. The chain is Ferredoxin-like protein FixX (fixX) from Salmonella typhimurium (strain LT2 / SGSC1412 / ATCC 700720).